We begin with the raw amino-acid sequence, 406 residues long: Argininosuccinate synthase (406 aa).

8-16 (AYSGGLDTS) is a binding site for ATP. Tyr-86 lines the L-citrulline pocket. Position 116 (Gly-116) interacts with ATP. L-aspartate-binding residues include Thr-118, Asn-122, and Asp-123. Residue Asn-122 participates in L-citrulline binding. Residues Arg-126, Ser-174, Ser-183, Glu-259, and Tyr-271 each contribute to the L-citrulline site.

The protein belongs to the argininosuccinate synthase family. Type 1 subfamily. As to quaternary structure, homotetramer.

The protein localises to the cytoplasm. It carries out the reaction L-citrulline + L-aspartate + ATP = 2-(N(omega)-L-arginino)succinate + AMP + diphosphate + H(+). The protein operates within amino-acid biosynthesis; L-arginine biosynthesis; L-arginine from L-ornithine and carbamoyl phosphate: step 2/3. This Dehalococcoides mccartyi (strain ATCC BAA-2266 / KCTC 15142 / 195) (Dehalococcoides ethenogenes (strain 195)) protein is Argininosuccinate synthase.